Consider the following 557-residue polypeptide: Syntaxin-binding protein 4 (557 aa).

Phosphoserine occurs at positions 10 and 12. The region spanning A19 to F105 is the PDZ domain. Position 99 is a phosphoserine; by PKB/AKT2 (S99). Low complexity predominate over residues P142–P154. The segment at P142 to N214 is disordered. The segment covering S179–A194 has biased composition (polar residues). S216 carries the phosphoserine modification. A coiled-coil region spans residues A298–K408. The residue at position 467 (S467) is a Phosphoserine. One can recognise a WW domain in the interval D500–M533.

As to quaternary structure, interacts with STX4A. Post-translationally, phosphorylated on Ser-99 by PKB/AKT2 after insulin treatment. Phosphorylation on Ser-99 abolishes the interaction with STX4A. As to expression, detected in skeletal muscle, heart, testis, adipocytes and pancreatic islet cells.

The protein localises to the cytoplasm. In terms of biological role, plays a role in the translocation of transport vesicles from the cytoplasm to the plasma membrane. Inhibits the translocation of SLC2A4 from intracellular vesicles to the plasma membrane by STX4A binding and preventing the interaction between STX4A and VAMP2. Stimulation with insulin disrupts the interaction with STX4A, leading to increased levels of SLC2A4 at the plasma membrane. May also play a role in the regulation of insulin release by pancreatic beta cells after stimulation by glucose. This is Syntaxin-binding protein 4 (Stxbp4) from Mus musculus (Mouse).